A 942-amino-acid polypeptide reads, in one-letter code: Apolipoprotein B receptor (942 aa).

Disordered regions lie at residues 66–212 (GLRS…VTED), 240–269 (ERMV…QAML), 283–487 (DSLG…SPER), 501–607 (AGPE…VPWE), and 671–942 (EGRG…PKPQ). Composition is skewed to basic and acidic residues over residues 106 to 123 (QAER…DARG), 132 to 143 (PEAEPGTHRDRS), 240 to 252 (ERMV…ERAR), 312 to 330 (EADK…EAEV), and 338 to 352 (EAER…HIAE). Residues 353 to 370 (EEAMGEQETEGSFEDEER) show a composition bias toward acidic residues. At Ser-364 the chain carries Phosphoserine. Residues 384-397 (EEVRAEESSREKRN) show a composition bias toward basic and acidic residues. Residues 415-425 (PDWEDSPEVST) are compositionally biased toward acidic residues. Basic and acidic residues-rich tracts occupy residues 444–458 (LRVK…ELVR) and 466–475 (QLEEGQKGQE). 2 positions are modified to phosphoserine: Ser-484 and Ser-520. Basic and acidic residues-rich tracts occupy residues 514–531 (GVDR…EAGK) and 672–687 (GRGE…ETTE). Positions 709–721 (QEIDGTEEGEQAE) are enriched in acidic residues. A compositionally biased stretch (low complexity) spans 837 to 853 (SRLDVSVPRSRVLLSRS). Basic residues predominate over residues 854 to 863 (SSRRRSRPSF).

As to quaternary structure, homodimer. There are 2 forms in macrophages, the membrane-binding proteins 200 kDa (MBP 200) and 235 kDa (MBP 235), that can be reduced into a single active ligand-binding species with intermediate mobility (MBP 200R). Highly expressed in spleen, lung and skeletal muscle, and weakly in brain, heart, kidney, and testis.

The protein resides in the cell membrane. Macrophage receptor that binds to the apolipoprotein B48 (APOB) of dietary triglyceride (TG)-rich lipoproteins (TRL) or to a like domain of APOB in hypertriglyceridemic very low density lipoprotein (HTG-VLDL). Binds and internalizes TRL when out of the context of the macrophage. May provide essential lipids to reticuloendothelial cells. Could also be involved in foam cell formation with elevated TRL and remnant lipoprotein (RLP). Mediates the rapid high-affinity uptake of chylomicrons (CM), HTG-VLDL, and trypsinized (tryp) VLDL devoid of APOE in vitro in macrophages. The protein is Apolipoprotein B receptor of Mus musculus (Mouse).